Consider the following 337-residue polypeptide: MQKSLITKWLCISCIMVIATLVIGGITRLTGSGLSIVEWRPVTGILPPFSFESWQSEFAKYKAFPEYNSVNYGITLSQFKFIYLLEFIHRLLGRITALIYIVPLIYFYFKDVIKNRDMLPYIIALLLFCVQGFIGWYMVKSGLLNSPYVSHFRLAFHLIIAVIIYHILFYQLIKNRCDILLIPSQTDFKLPLIFSGIAITVVYVQIFLGALVAGLDAGLIYNSFPLMDDRFIPMEIKDNFFDLKNWYDPVFIQFIHRLVGYSVFLVVVVLISCLLKIEHPKLNKIAYFLMIALFMQVSTGILTLLYSVPIIIASIHQLFAIILLSIIIWCYFLIKSS.

Transmembrane regions (helical) follow at residues 6-26 (ITKW…IGGI), 87-107 (FIHR…LIYF), 119-139 (LPYI…WYMV), 154-174 (LAFH…QLIK), and 192-212 (LIFS…GALV). Residue His-256 participates in heme binding. Transmembrane regions (helical) follow at residues 258–278 (LVGY…LKIE), 285–305 (IAYF…LTLL), and 308–328 (VPII…SIII). His-316 contacts heme.

It belongs to the COX15/CtaA family. Type 2 subfamily. As to quaternary structure, interacts with CtaB. The cofactor is heme b.

It is found in the cell membrane. It catalyses the reaction Fe(II)-heme o + 2 A + H2O = Fe(II)-heme a + 2 AH2. It functions in the pathway porphyrin-containing compound metabolism; heme A biosynthesis; heme A from heme O: step 1/1. Catalyzes the conversion of heme O to heme A by two successive hydroxylations of the methyl group at C8. The first hydroxylation forms heme I, the second hydroxylation results in an unstable dihydroxymethyl group, which spontaneously dehydrates, resulting in the formyl group of heme A. The sequence is that of Heme A synthase from Rickettsia conorii (strain ATCC VR-613 / Malish 7).